The primary structure comprises 550 residues: Nucleoside hydrolase 4 (550 aa).

This sequence belongs to the IUNH family.

The protein resides in the cytoplasm. Functionally, may be involved in the degradation of nucleosides. This is Nucleoside hydrolase 4 from Arabidopsis thaliana (Mouse-ear cress).